Here is an 82-residue protein sequence, read N- to C-terminus: Small ribosomal subunit protein bS18 (82 aa).

Belongs to the bacterial ribosomal protein bS18 family. In terms of assembly, part of the 30S ribosomal subunit. Forms a tight heterodimer with protein bS6.

Its function is as follows. Binds as a heterodimer with protein bS6 to the central domain of the 16S rRNA, where it helps stabilize the platform of the 30S subunit. The polypeptide is Small ribosomal subunit protein bS18 (Chlamydia caviae (strain ATCC VR-813 / DSM 19441 / 03DC25 / GPIC) (Chlamydophila caviae)).